We begin with the raw amino-acid sequence, 458 residues long: Alpha-2C adrenergic receptor (458 aa).

The Extracellular portion of the chain corresponds to 1–51 (MASPALAAALAAAAAEGPNGSDAGEWGSGGGANASGTDWGPPPGQYSAGAV). Residues N19 and N33 are each glycosylated (N-linked (GlcNAc...) asparagine). Residues 52–76 (AGLAAVVGFLIVFTVVGNVLVVIAV) traverse the membrane as a helical segment. Residues 77–88 (LTSRALRAPQNL) lie on the Cytoplasmic side of the membrane. A helical membrane pass occupies residues 89 to 114 (FLVSLASADILVATLVMPFSLANELM). Residues 115 to 124 (AYWYFGQVWC) are Extracellular-facing. The cysteines at positions 124 and 202 are disulfide-linked. A helical transmembrane segment spans residues 125 to 147 (GVYLALDVLFCTSSIVHLCAISL). Residues 148 to 168 (DRYWSVTQAVEYNLKRTPRRV) lie on the Cytoplasmic side of the membrane. A helical transmembrane segment spans residues 169–191 (KATIVAVWLISAVISFPPLVSFY). Over 192–207 (RRPDGAAYPQCGLNDE) the chain is Extracellular. Residues 208–231 (TWYILSSCIGSFFAPCLIMGLVYA) form a helical membrane-spanning segment. The Cytoplasmic portion of the chain corresponds to 232 to 379 (RIYRVAKLRT…QAREKRFTFV (148 aa)). The disordered stretch occupies residues 245–343 (SEKRGPAGPD…SPGPGGRLSR (99 aa)). Residues 291–303 (RRRRRGALRRGGR) show a composition bias toward basic residues. The helical transmembrane segment at 380–403 (LAVVMGVFVLCWFPFFFSYSLYGI) threads the bilayer. At 404 to 416 (CREACQLPEPLFK) the chain is on the extracellular side. Residues 417–437 (FFFWIGYCNSSLNPVIYTVFN) traverse the membrane as a helical segment. Residues 438 to 458 (QDFRRSFKHILFRRRRRGFRQ) are Cytoplasmic-facing.

This sequence belongs to the G-protein coupled receptor 1 family. Adrenergic receptor subfamily. ADRA2C sub-subfamily.

It is found in the cell membrane. In terms of biological role, alpha-2 adrenergic receptors mediate the catecholamine-induced inhibition of adenylate cyclase through the action of G proteins. This Rattus norvegicus (Rat) protein is Alpha-2C adrenergic receptor (Adra2c).